We begin with the raw amino-acid sequence, 574 residues long: 3-hydroxy-3-methylglutaryl-coenzyme A reductase 3 (574 aa).

Residues 1 to 30 (MDVRRRPVKPLYPSEHISSGEPLKPHNQDS) are disordered. The helical transmembrane segment at 41–61 (PLYLTNGLFFTMFFSVMYFLL) threads the bilayer. The N-linked (GlcNAc...) asparagine glycan is linked to asparagine 78. Residues 83-103 (VAMVSLIASVIYLLGFFGIGF) traverse the membrane as a helical segment. Residues 104 to 161 (VQSFVSKGNNDSWDVEDESPEQFIDRTVTPPPVRRNIPMKSVPVAEKTAQIITPFSSE) form a linker region. Asparagine 113 carries N-linked (GlcNAc...) asparagine glycosylation. The catalytic stretch occupies residues 162 to 574 (DDEVVIKSVV…YNRSCKDVTK (413 aa)). Glutamate 256 functions as the Charge relay system in the catalytic mechanism. The N-linked (GlcNAc...) asparagine glycan is linked to asparagine 320. The Charge relay system role is filled by lysine 388. Asparagine 433 is a glycosylation site (N-linked (GlcNAc...) asparagine). Aspartate 464 functions as the Charge relay system in the catalytic mechanism. Histidine 562 acts as the Proton donor in catalysis. Asparagine 566 carries an N-linked (GlcNAc...) asparagine glycan.

The protein belongs to the HMG-CoA reductase family. In terms of tissue distribution, expressed in mature petals and anthers.

Its subcellular location is the endoplasmic reticulum membrane. The catalysed reaction is (R)-mevalonate + 2 NADP(+) + CoA = (3S)-3-hydroxy-3-methylglutaryl-CoA + 2 NADPH + 2 H(+). The protein operates within metabolic intermediate biosynthesis; (R)-mevalonate biosynthesis; (R)-mevalonate from acetyl-CoA: step 3/3. Catalyzes the synthesis of mevalonate. The specific precursor of all isoprenoid compounds present in plants. The polypeptide is 3-hydroxy-3-methylglutaryl-coenzyme A reductase 3 (HMG3) (Solanum tuberosum (Potato)).